A 313-amino-acid chain; its full sequence is WUSCHEL-related homeobox 5 (313 aa).

The segment at 1–32 (METTTTTLGGGGGGRAGGFSDPPSPLSPPLSP) is disordered. Over residues 8–17 (LGGGGGGRAG) the composition is skewed to gly residues. Residues 22 to 31 (PPSPLSPPLS) are compositionally biased toward pro residues. Residues 40-104 (LANARWTPTK…NHKARQRQKQ (65 aa)) constitute a DNA-binding region (homeobox; WUS-type). 2 disordered regions span residues 224 to 247 (AAGR…GRET) and 271 to 313 (CAAV…SGGR). Positions 271–301 (CAAVSPTTPSASASFSWESESSDSPSSEAPP) are enriched in low complexity.

Belongs to the WUS homeobox family.

It localises to the nucleus. In terms of biological role, transcription factor which may be involved in developmental processes. The protein is WUSCHEL-related homeobox 5 (WOX5) of Oryza sativa subsp. japonica (Rice).